Reading from the N-terminus, the 446-residue chain is Probable cytosolic iron-sulfur protein assembly protein 1 (446 aa).

7 WD repeats span residues A17–N59, G63–E106, G143–D182, E192–C241, G247–S291, V330–T368, and G398–L446. Over residues E106–D128 the composition is skewed to basic and acidic residues. The interval E106 to D133 is disordered.

The protein belongs to the WD repeat CIA1 family.

Essential component of the cytosolic iron-sulfur (Fe/S) protein assembly machinery. Required for the maturation of extramitochondrial Fe/S proteins. The protein is Probable cytosolic iron-sulfur protein assembly protein 1 of Pyricularia oryzae (strain 70-15 / ATCC MYA-4617 / FGSC 8958) (Rice blast fungus).